The chain runs to 1004 residues: UPF0182 protein Noca_1530 (1004 aa).

A disordered region spans residues 1–20 (MSELFDEAPRDPGPPARSGS). Transmembrane regions (helical) follow at residues 26 to 46 (LIVT…FAGI), 71 to 91 (VLFF…IYLA), 120 to 140 (TWLL…SAIG), 183 to 203 (MAVL…YGGI), 212 to 232 (LSGA…LAKA), 261 to 281 (VLPA…LFFV), and 293 to 313 (VGLA…PGIV). Disordered regions lie at residues 899 to 924 (GVST…PPAT) and 974 to 1004 (LGQK…SPSS). Low complexity-rich tracts occupy residues 903–916 (GPGT…QPGD) and 979–1004 (GSAG…SPSS).

Belongs to the UPF0182 family.

It is found in the cell membrane. The protein is UPF0182 protein Noca_1530 of Nocardioides sp. (strain ATCC BAA-499 / JS614).